Consider the following 161-residue polypeptide: Probable chemoreceptor glutamine deamidase CheD (161 aa).

It belongs to the CheD family.

The enzyme catalyses L-glutaminyl-[protein] + H2O = L-glutamyl-[protein] + NH4(+). Functionally, probably deamidates glutamine residues to glutamate on methyl-accepting chemotaxis receptors (MCPs), playing an important role in chemotaxis. The polypeptide is Probable chemoreceptor glutamine deamidase CheD (Trichlorobacter lovleyi (strain ATCC BAA-1151 / DSM 17278 / SZ) (Geobacter lovleyi)).